An 88-amino-acid polypeptide reads, in one-letter code: U-scoloptoxin(XY)-Er1b (88 aa).

An N-terminal signal peptide occupies residues 1–24 (MASQVVLSFALVVVLAVFVGQVDS). The segment at 66-88 (RPELSPGALDDSSEEKDNEASLA) is disordered. A propeptide spanning residues 79–88 (EEKDNEASLA) is cleaved from the precursor.

Belongs to the scoloptoxin-XY family. Contains 3 disulfide bonds. In terms of tissue distribution, expressed by the venom gland.

The protein localises to the secreted. The protein is U-scoloptoxin(XY)-Er1b of Ethmostigmus rubripes (Giant centipede).